The sequence spans 187 residues: Large ribosomal subunit protein bL17 (187 aa).

The protein belongs to the bacterial ribosomal protein bL17 family. Part of the 50S ribosomal subunit. Contacts protein L32.

In Rhodococcus opacus (strain B4), this protein is Large ribosomal subunit protein bL17.